The sequence spans 56 residues: Photosystem II reaction center protein K (56 aa).

Residues 1–19 (MFNIFLDDAFIHSNNPFFG) constitute a propeptide that is removed on maturation. A helical transmembrane segment spans residues 35-55 (MPIIPVLSFLLAFVWQAAVSF).

It belongs to the PsbK family. In terms of assembly, PSII is composed of 1 copy each of membrane proteins PsbA, PsbB, PsbC, PsbD, PsbE, PsbF, PsbH, PsbI, PsbJ, PsbK, PsbL, PsbM, PsbT, PsbX, PsbY, PsbZ, Psb30/Ycf12, at least 3 peripheral proteins of the oxygen-evolving complex and a large number of cofactors. It forms dimeric complexes.

It is found in the plastid. The protein localises to the chloroplast thylakoid membrane. Its function is as follows. One of the components of the core complex of photosystem II (PSII). PSII is a light-driven water:plastoquinone oxidoreductase that uses light energy to abstract electrons from H(2)O, generating O(2) and a proton gradient subsequently used for ATP formation. It consists of a core antenna complex that captures photons, and an electron transfer chain that converts photonic excitation into a charge separation. The chain is Photosystem II reaction center protein K from Pinus thunbergii (Japanese black pine).